The sequence spans 475 residues: Ankyrin repeat, SAM and basic leucine zipper domain-containing protein 1 (475 aa).

Positions 1–24 (MAASALRGPPVAGGGESSESEDDG) are disordered. A phosphoserine mark is found at serine 17, serine 18, and serine 20. 6 ANK repeats span residues 45–74 (EKKE…SVDS), 78–107 (YGWT…NASF), 110–144 (DKQS…DPNV), 148–177 (RLMT…EVNT), 181–210 (NGYT…NKML), and 214–243 (DGKM…PLEG). In terms of domain architecture, SAM spans 272–334 (SYTAFGDLEV…KILAALKELQ (63 aa)).

Interacts with DDX4, PIWIL1, RANBP9 and TDRD1.

It is found in the cytoplasm. In terms of biological role, plays a central role during spermatogenesis by repressing transposable elements and preventing their mobilization, which is essential for the germline integrity. Acts via the piRNA metabolic process, which mediates the repression of transposable elements during meiosis by forming complexes composed of piRNAs and Piwi proteins and governs the methylation and subsequent repression of transposons. Its association with pi-bodies suggests a participation in the primary piRNAs metabolic process. Required prior to the pachytene stage to facilitate the production of multiple types of piRNAs, including those associated with repeats involved in the regulation of retrotransposons. May act by mediating protein-protein interactions during germ cell maturation. The sequence is that of Ankyrin repeat, SAM and basic leucine zipper domain-containing protein 1 (ASZ1) from Gorilla gorilla gorilla (Western lowland gorilla).